Here is a 1066-residue protein sequence, read N- to C-terminus: Ankyrin repeat protein nuc-2 (1066 aa).

In terms of domain architecture, SPX spans 1–166 (MKFGKQIQKR…KSKTKELYLS (166 aa)). ANK repeat units follow at residues 268 to 298 (RVTR…DIQS), 336 to 366 (YGRV…TINL), 370 to 399 (DNFT…RIDP), 403 to 432 (TDHV…KILA), 435 to 465 (EGLY…DLDQ), 470 to 499 (YGWT…DPNI), and 503 to 532 (KDLP…EKAA). The GP-PDE domain occupies 717–1048 (ITDFETYWKA…DPFPKLPKGV (332 aa)). The interval 923-963 (KQQQQGSCSKGDGDEDMGGTTAASRREAADERTLQSDGRRT) is disordered. Basic and acidic residues predominate over residues 946 to 962 (SRREAADERTLQSDGRR).

Functionally, controls phosphorus acquisition. This is Ankyrin repeat protein nuc-2 (nuc-2) from Neurospora crassa (strain ATCC 24698 / 74-OR23-1A / CBS 708.71 / DSM 1257 / FGSC 987).